The chain runs to 124 residues: Small ribosomal subunit protein uS12 (124 aa).

Residues 1-22 (MATVNQLVRKPRQKPDAKSNVA) form a disordered region. A 3-methylthioaspartic acid modification is found at aspartate 89.

Belongs to the universal ribosomal protein uS12 family. Part of the 30S ribosomal subunit. Contacts proteins S8 and S17. May interact with IF1 in the 30S initiation complex.

With S4 and S5 plays an important role in translational accuracy. Functionally, interacts with and stabilizes bases of the 16S rRNA that are involved in tRNA selection in the A site and with the mRNA backbone. Located at the interface of the 30S and 50S subunits, it traverses the body of the 30S subunit contacting proteins on the other side and probably holding the rRNA structure together. The combined cluster of proteins S8, S12 and S17 appears to hold together the shoulder and platform of the 30S subunit. This is Small ribosomal subunit protein uS12 from Pseudoalteromonas atlantica (strain T6c / ATCC BAA-1087).